Here is a 100-residue protein sequence, read N- to C-terminus: Large ribosomal subunit protein uL23 (100 aa).

The protein belongs to the universal ribosomal protein uL23 family. In terms of assembly, part of the 50S ribosomal subunit. Contacts protein L29, and trigger factor when it is bound to the ribosome.

In terms of biological role, one of the early assembly proteins it binds 23S rRNA. One of the proteins that surrounds the polypeptide exit tunnel on the outside of the ribosome. Forms the main docking site for trigger factor binding to the ribosome. This chain is Large ribosomal subunit protein uL23, found in Mycobacterium ulcerans (strain Agy99).